A 1875-amino-acid polypeptide reads, in one-letter code: Soluble starch synthase 3a, chloroplastic/amyloplastic (1875 aa).

The transit peptide at 1–49 (MEMALRPQSLLCPRSRLKVVIRPASSASGGGLAQYFLMTRRYTGSRIVR) directs the protein to the chloroplast. Positions 1007-1065 (KRELERVATEEAERRRHAEEQQRMGEQRAAEQAAREQAKKEIELKKNKLQNLLSSARTH) form a coiled coil. The tract at residues 1014-1043 (ATEEAERRRHAEEQQRMGEQRAAEQAAREQ) is disordered.

It belongs to the glycosyltransferase 1 family. Bacterial/plant glycogen synthase subfamily. Expressed in the endosperm.

Its subcellular location is the plastid. It localises to the chloroplast. It is found in the amyloplast. It catalyses the reaction [(1-&gt;4)-alpha-D-glucosyl](n) + ADP-alpha-D-glucose = [(1-&gt;4)-alpha-D-glucosyl](n+1) + ADP + H(+). It participates in glycan biosynthesis; starch biosynthesis. Involved in starch synthesis in endosperm amyloplasts. Plays an important role in the elongation of amylopectin B chains. The protein is Soluble starch synthase 3a, chloroplastic/amyloplastic of Oryza sativa subsp. japonica (Rice).